The chain runs to 110 residues: Ribonuclease P protein component 1 (110 aa).

It belongs to the eukaryotic/archaeal RNase P protein component 1 family. In terms of assembly, consists of a catalytic RNA component and at least 4-5 protein subunits.

It localises to the cytoplasm. It carries out the reaction Endonucleolytic cleavage of RNA, removing 5'-extranucleotides from tRNA precursor.. Functionally, part of ribonuclease P, a protein complex that generates mature tRNA molecules by cleaving their 5'-ends. The protein is Ribonuclease P protein component 1 of Methanosarcina acetivorans (strain ATCC 35395 / DSM 2834 / JCM 12185 / C2A).